A 119-amino-acid chain; its full sequence is UPF0292 protein TV1259 (119 aa).

One can recognise a Toprim domain in the interval 11-93; the sequence is SIPIIVEGRN…YVDLYLWNFI (83 aa). The Mg(2+) site is built by Glu-17, Asp-62, and Asp-64.

Belongs to the UPF0292 family. Mg(2+) is required as a cofactor.

The sequence is that of UPF0292 protein TV1259 from Thermoplasma volcanium (strain ATCC 51530 / DSM 4299 / JCM 9571 / NBRC 15438 / GSS1).